The chain runs to 129 residues: Membrane protein 0 (129 aa).

A disordered region spans residues Met-1–Asp-25. A PPXY motif motif is present at residues Pro-44–Tyr-47. A helical membrane pass occupies residues Phe-100–Phe-120.

It belongs to the varicellovirus ORF0 protein family. Interacts with host ITCH; this interaction probably mediates ITCH degradation.

It is found in the host Golgi apparatus membrane. This is Membrane protein 0 from Homo sapiens (Human).